We begin with the raw amino-acid sequence, 261 residues long: Leucine-rich repeat-containing protein 61 (261 aa).

3 LRR repeats span residues 54–75 (GLEW…ASLR), 76–97 (QLAV…AACE), and 98–119 (NLQC…QCLA). Residues 138-183 (NPLCASPCYWASVRELLPGLKVLDGERVSGRGSDFYQLCRDLDSSL) enclose the LRRCT domain.

This chain is Leucine-rich repeat-containing protein 61 (LRRC61), found in Bos taurus (Bovine).